The following is a 570-amino-acid chain: D-xylulose kinase A (570 aa).

Substrate is bound by residues H95, R166, D282, and N283. ATP is bound by residues W364, 469–470 (GG), and N473.

Belongs to the FGGY kinase family.

The protein resides in the cytoplasm. The catalysed reaction is D-xylulose + ATP = D-xylulose 5-phosphate + ADP + H(+). Its function is as follows. Highly specific D-xylulose kinase which participates in the catabolism of xylose. Xylose is a major component of hemicelluloses such as xylan. Most fungi utilize D-xylose via three enzymatic reactions, xylose reductase (XR), xylitol dehydrogenase (XDH), and xylulokinase, to form xylulose 5-phosphate, which enters pentose phosphate pathway. The polypeptide is D-xylulose kinase A (xkiA) (Aspergillus niger).